A 652-amino-acid chain; its full sequence is Sciellin (652 aa).

Basic residues predominate over residues 1–10 (MSNFSSRKKS). Disordered stretches follow at residues 1 to 29 (MSNF…QQGF) and 43 to 180 (SWIK…KPLG). A compositionally biased stretch (basic and acidic residues) spans 66–95 (NSHDALDRKLIERDEPKATISRYRSEDMLD). Lysine 82 is modified (N6-acetyllysine). Over residues 97 to 110 (TLSSFRTPQSTKTP) the composition is skewed to polar residues. Residues 111-130 (AVSSFNANTTATASTPATTP) are compositionally biased toward low complexity. Pro residues predominate over residues 161–170 (LHPPLPPKPC). Repeat copies occupy residues 207-226 (TEDL…TDKG), 227-241 (EELD…SLNR), 242-261 (NQGL…LDKR), 262-281 (AQSL…DGKG), 282-301 (NQAF…DRRS), 302-320 (QDLR…IGRR), 321-340 (KQDL…NMKR), 341-360 (GKSL…SNKG), 361-380 (GPSL…ANQR), 381-398 (DQDL…NRSS), 399-418 (QHSL…TTAR), 419-438 (HQDL…NNQR), 439-458 (NHDV…CEQS), 459-477 (EELD…NTNG), and 478-496 (GQDL…EKNG). A 15 X approximate tandem repeats region spans residues 207-496 (TEDLDDIIRV…VNSHVAEKNG (290 aa)). Phosphoserine is present on serine 264. Phosphoserine is present on serine 343. Residues 353-385 (EVNRSNKGGPSLDNFTKGVPARSRANQRDQDLD) are disordered. The disordered stretch occupies residues 436–455 (NQRNHDVDSTIRGNPTGTRC). Polar residues predominate over residues 446-455 (IRGNPTGTRC). The LIM zinc-binding domain maps to 583 to 649 (DMCTYCRKPL…EPCYSKVMAK (67 aa)).

In terms of tissue distribution, expressed in the upper layers of stratified epithelia, including, ependyma and choroid plexus of the brain ventricles.

The protein localises to the cytoplasm. The protein resides in the membrane. In terms of biological role, may function in the assembly or regulation of proteins in the cornified envelope. The LIM domain may be involved in homotypic or heterotypic associations and may function to localize sciellin to the cornified envelope. This is Sciellin (Scel) from Mus musculus (Mouse).